A 117-amino-acid chain; its full sequence is G antigen 4 (117 aa).

The segment at 1-117 is disordered; sequence MSWRGRSTYY…PEEGEKQSQC (117 aa). 2 stretches are compositionally biased toward acidic residues: residues 32-45 and 87-96; these read FSDE…EEGE and ECEDGPDGQE. A compositionally biased stretch (basic and acidic residues) spans 103-117; the sequence is EEVKTPEEGEKQSQC.

This sequence belongs to the GAGE family. In terms of tissue distribution, expressed in a variety of tumor tissues but not in normal tissues, except testis.

Its function is as follows. Antigen, recognized on melanoma by autologous cytolytic T-lymphocytes. The polypeptide is G antigen 4 (Homo sapiens (Human)).